We begin with the raw amino-acid sequence, 1166 residues long: Poly [ADP-ribose] polymerase tankyrase-2 (1166 aa).

3 ANK repeats span residues arginine 57–aspartate 89, glycine 90–asparagine 122, and tryptophan 123–threonine 155. A (3S)-3-hydroxyasparagine; by HIF1AN; partial modification is found at asparagine 203. ANK repeat units follow at residues arginine 210–lysine 242, glycine 243–leucine 275, tryptophan 276–cysteine 308, threonine 363–lysine 398, glutamate 399–asparagine 431, and leucine 432–leucine 464. Histidine 238 bears the (3S)-3-hydroxyhistidine; by HIF1AN; partial mark. The residue at position 271 (asparagine 271) is a (3S)-3-hydroxyasparagine; by HIF1AN; partial. At asparagine 427 the chain carries (3S)-3-hydroxyasparagine; by HIF1AN; partial. Residue asparagine 518 is modified to (3S)-3-hydroxyasparagine; by HIF1AN; partial. ANK repeat units lie at residues arginine 525 to lysine 557, glycine 558 to leucine 590, and tryptophan 591 to arginine 623. The tract at residues leucine 545 to histidine 553 is HIF1AN-binding. A (3S)-3-hydroxyhistidine; by HIF1AN; partial modification is found at histidine 553. Asparagine 586 is modified ((3S)-3-hydroxyasparagine; by HIF1AN; partial). (3S)-3-hydroxyasparagine; by HIF1AN; partial is present on residues asparagine 671, asparagine 706, and asparagine 739. ANK repeat units follow at residues arginine 678–lysine 710, glycine 711–lysine 743, and tryptophan 744–glutamine 776. Residues glycine 819–serine 839 form a disordered region. Residues alanine 822–serine 839 show a composition bias toward low complexity. Residues glycine 873–glycine 936 form the SAM domain. One can recognise a PARP catalytic domain in the interval serine 959–valine 1164. Residues cysteine 1081, histidine 1084, cysteine 1089, and cysteine 1092 each coordinate Zn(2+).

The protein belongs to the ARTD/PARP family. In terms of assembly, oligomerizes and associates with TNKS. Interacts with the cytoplasmic domain of LNPEP/Otase in SLC2A4/GLUT4-vesicles. Binds to the N-terminus of Grb14 and TRF1 with its ankyrin repeat region. Interacts with HIF1AN. Interacts with RNF146; this interaction leads to ubiquitination and proteasomal degradation. Interacts with NUMA1. In terms of processing, ubiquitinated at 'Lys-48' and 'Lys-63' by RNF146 when auto-poly-ADP-ribosylated; this leads to degradation. Deubiquitinated by USP25; leading to stabilization. Post-translationally, ADP-ribosylated (-auto). Poly-ADP-ribosylated protein is recognized by RNF146, followed by ubiquitination. The crystallographic evidence suggests that the 3-hydroxyhistidine may be the (3S) stereoisomer. As to expression, highly expressed in placenta, skeletal muscle, liver, brain, kidney, heart, thymus, spinal cord, lung, peripheral blood leukocytes, pancreas, lymph nodes, spleen, prostate, testis, ovary, small intestine, colon, mammary gland, breast and breast carcinoma, and in common-type meningioma. Highly expressed in fetal liver, heart and brain.

Its subcellular location is the cytoplasm. It localises to the golgi apparatus membrane. It is found in the nucleus. The protein localises to the chromosome. The protein resides in the telomere. It catalyses the reaction NAD(+) + (ADP-D-ribosyl)n-acceptor = nicotinamide + (ADP-D-ribosyl)n+1-acceptor + H(+).. It carries out the reaction L-aspartyl-[protein] + NAD(+) = 4-O-(ADP-D-ribosyl)-L-aspartyl-[protein] + nicotinamide. The enzyme catalyses L-glutamyl-[protein] + NAD(+) = 5-O-(ADP-D-ribosyl)-L-glutamyl-[protein] + nicotinamide. With respect to regulation, specifically inhibited by XAV939, a small molecule, leading to inhibit the Wnt signaling pathway by stabilizing AXIN1 and AXIN2. Inhibited by talazoparib. In terms of biological role, poly-ADP-ribosyltransferase involved in various processes such as Wnt signaling pathway, telomere length and vesicle trafficking. Acts as an activator of the Wnt signaling pathway by mediating poly-ADP-ribosylation of AXIN1 and AXIN2, 2 key components of the beta-catenin destruction complex: poly-ADP-ribosylated target proteins are recognized by RNF146, which mediates their ubiquitination and subsequent degradation. Also mediates poly-ADP-ribosylation of BLZF1 and CASC3, followed by recruitment of RNF146 and subsequent ubiquitination. Mediates poly-ADP-ribosylation of TERF1, thereby contributing to the regulation of telomere length. Stimulates 26S proteasome activity. This chain is Poly [ADP-ribose] polymerase tankyrase-2, found in Homo sapiens (Human).